The primary structure comprises 107 residues: uncharacterized protein (107 aa).

The HTH cro/C1-type domain maps to 13–68 (LQEEFLEPLSLKISDLAQILDVHRNTASNIVNNSSRITLEMAVKLAKVFDTTPEFW). The H-T-H motif DNA-binding region spans 24–43 (KISDLAQILDVHRNTASNIV).

Belongs to the VapA/VapI family.

This is an uncharacterized protein from Haemophilus influenzae (strain ATCC 51907 / DSM 11121 / KW20 / Rd).